The chain runs to 415 residues: Vascular endothelial growth factor C (415 aa).

A signal peptide spans 1–31 (MHLLCFLSLACSLLAAALIPGPREAPATVAA). The propeptide occupies 32–107 (FESGLGFSEA…RTGDTVKLAA (76 aa)). Disulfide bonds link Cys127-Cys169, Cys158-Cys205, and Cys162-Cys207. Residues Asn171, Asn201, and Asn236 are each glycosylated (N-linked (GlcNAc...) asparagine). Positions 224–415 (SLPATLPQCQ…PSYWKRPHLN (192 aa)) are excised as a propeptide. 4 repeat units span residues 276–291 (CGPN…QCVC), 300–315 (CGPH…QCVC), 324–339 (CGAN…QCVC), and 343–358 (CPRN…ACEC). Positions 276 to 358 (CGPNKELDED…LNPGKCACEC (83 aa)) are 4 X 16 AA repeats of C-X(10)-C-X-C-X(1,3)-C.

It belongs to the PDGF/VEGF growth factor family. As to quaternary structure, homodimer; non-covalent and antiparallel. Interacts with FLT4/VEGFR3; the interaction is required for FLT4/VEGFR3 homodimarization and activation. In terms of processing, undergoes a complex proteolytic maturation which generates a variety of processed secreted forms with increased activity toward VEGFR-3, but only the fully processed form could activate VEGFR-2. VEGF-C first form an antiparallel homodimer linked by disulfide bonds. Before secretion, a cleavage occurs between Arg-223 and Ser-224 producing a heterotetramer. The next extracellular step of the processing removes the N-terminal propeptide. Finally the mature VEGF-C is composed mostly of two VEGF homology domains (VHDs) bound by non-covalent interactions. Highly expressed in the lung, ovary, preputial gland and the adrenal gland. Expressed in the post-pubertal mammary glands.

It is found in the secreted. In terms of biological role, growth factor active in angiogenesis, and endothelial cell growth, stimulating their proliferation and migration and also has effects on the permeability of blood vessels. May function in angiogenesis of the venous and lymphatic vascular systems during embryogenesis, and also in the maintenance of differentiated lymphatic endothelium in adults. Binds and activates KDR/VEGFR2 and FLT4/VEGFR3 receptors. The polypeptide is Vascular endothelial growth factor C (Vegfc) (Rattus norvegicus (Rat)).